The chain runs to 487 residues: Glutamyl-tRNA(Gln) amidotransferase subunit A (487 aa).

Active-site charge relay system residues include lysine 80 and serine 155. The Acyl-ester intermediate role is filled by serine 179.

This sequence belongs to the amidase family. GatA subfamily. In terms of assembly, heterotrimer of A, B and C subunits.

It carries out the reaction L-glutamyl-tRNA(Gln) + L-glutamine + ATP + H2O = L-glutaminyl-tRNA(Gln) + L-glutamate + ADP + phosphate + H(+). Functionally, allows the formation of correctly charged Gln-tRNA(Gln) through the transamidation of misacylated Glu-tRNA(Gln) in organisms which lack glutaminyl-tRNA synthetase. The reaction takes place in the presence of glutamine and ATP through an activated gamma-phospho-Glu-tRNA(Gln). The sequence is that of Glutamyl-tRNA(Gln) amidotransferase subunit A from Leptospira interrogans serogroup Icterohaemorrhagiae serovar copenhageni (strain Fiocruz L1-130).